Consider the following 439-residue polypeptide: Xaa-Pro dipeptidase (439 aa).

Mn(2+) is bound by residues Asp-244, Asp-255, His-335, Glu-380, and Glu-419.

The protein belongs to the peptidase M24B family. Bacterial-type prolidase subfamily. Mn(2+) serves as cofactor.

The catalysed reaction is Xaa-L-Pro dipeptide + H2O = an L-alpha-amino acid + L-proline. In terms of biological role, splits dipeptides with a prolyl residue in the C-terminal position. This chain is Xaa-Pro dipeptidase, found in Shewanella sp. (strain MR-7).